We begin with the raw amino-acid sequence, 110 residues long: U9-agatoxin-Ao1a (110 aa).

Positions 1 to 17 (MKLLLAIAGLFLVQTLA) are cleaved as a signal peptide. Positions 18-38 (EDVRAHEESSFLAAVAPEEQR) are excised as a propeptide. 5 disulfides stabilise this stretch: Cys-40–Cys-54, Cys-47–Cys-60, Cys-51–Cys-87, Cys-53–Cys-72, and Cys-62–Cys-70.

This sequence belongs to the neurotoxin 37 family. As to expression, expressed by the venom gland.

It localises to the secreted. This Agelena orientalis (Funnel-web spider) protein is U9-agatoxin-Ao1a.